Here is a 151-residue protein sequence, read N- to C-terminus: Small ribosomal subunit protein uS15 (151 aa).

Belongs to the universal ribosomal protein uS15 family.

This chain is Small ribosomal subunit protein uS15 (RPS13), found in Zea mays (Maize).